Consider the following 279-residue polypeptide: Large ribosomal subunit protein uL2 (279 aa).

Positions 222-264 (GVAMNPVDHPHGGGEGRTSGGRNPVTPAGKPTKGAKTRVNKAT) are disordered.

The protein belongs to the universal ribosomal protein uL2 family. In terms of assembly, part of the 50S ribosomal subunit. Forms a bridge to the 30S subunit in the 70S ribosome.

One of the primary rRNA binding proteins. Required for association of the 30S and 50S subunits to form the 70S ribosome, for tRNA binding and peptide bond formation. It has been suggested to have peptidyltransferase activity; this is somewhat controversial. Makes several contacts with the 16S rRNA in the 70S ribosome. This chain is Large ribosomal subunit protein uL2, found in Caulobacter sp. (strain K31).